The primary structure comprises 452 residues: D-inositol 3-phosphate glycosyltransferase (452 aa).

Residue His25 coordinates 1D-myo-inositol 3-phosphate. Residues 31 to 32 (QP) and Gly39 each bind UDP-N-acetyl-alpha-D-glucosamine. 1D-myo-inositol 3-phosphate is bound by residues 36 to 41 (DAGGMN), Lys94, Tyr127, Thr151, and Arg171. The UDP-N-acetyl-alpha-D-glucosamine site is built by Arg245, Lys250, and Gln309. The Mg(2+) site is built by Tyr318, Arg319, and Ser321. UDP-N-acetyl-alpha-D-glucosamine contacts are provided by Glu331 and Glu339. Residue Thr345 participates in Mg(2+) binding.

Belongs to the glycosyltransferase group 1 family. MshA subfamily. In terms of assembly, homodimer.

It catalyses the reaction 1D-myo-inositol 3-phosphate + UDP-N-acetyl-alpha-D-glucosamine = 1D-myo-inositol 2-acetamido-2-deoxy-alpha-D-glucopyranoside 3-phosphate + UDP + H(+). Functionally, catalyzes the transfer of a N-acetyl-glucosamine moiety to 1D-myo-inositol 3-phosphate to produce 1D-myo-inositol 2-acetamido-2-deoxy-glucopyranoside 3-phosphate in the mycothiol biosynthesis pathway. This Rhodococcus jostii (strain RHA1) protein is D-inositol 3-phosphate glycosyltransferase.